The primary structure comprises 196 residues: Protein GrpE (196 aa).

The tract at residues 1–41 is disordered; that stretch reads MSSKEQKTPEGQAPEEIITEQHDDVEAVEPEVSAEQVDPRD.

It belongs to the GrpE family. Homodimer.

It localises to the cytoplasm. Participates actively in the response to hyperosmotic and heat shock by preventing the aggregation of stress-denatured proteins, in association with DnaK and GrpE. It is the nucleotide exchange factor for DnaK and may function as a thermosensor. Unfolded proteins bind initially to DnaJ; upon interaction with the DnaJ-bound protein, DnaK hydrolyzes its bound ATP, resulting in the formation of a stable complex. GrpE releases ADP from DnaK; ATP binding to DnaK triggers the release of the substrate protein, thus completing the reaction cycle. Several rounds of ATP-dependent interactions between DnaJ, DnaK and GrpE are required for fully efficient folding. This chain is Protein GrpE, found in Klebsiella pneumoniae (strain 342).